Reading from the N-terminus, the 214-residue chain is Octanoyltransferase (214 aa).

The 176-residue stretch at 28–203 (GSGAETLLLL…RFEGFLDEFM (176 aa)) folds into the BPL/LPL catalytic domain. Residues 66-73 (RGGDVTYH), 133-135 (SIG), and 146-148 (GFA) contribute to the substrate site. The active-site Acyl-thioester intermediate is Cys-164.

This sequence belongs to the LipB family.

The protein localises to the cytoplasm. It carries out the reaction octanoyl-[ACP] + L-lysyl-[protein] = N(6)-octanoyl-L-lysyl-[protein] + holo-[ACP] + H(+). It participates in protein modification; protein lipoylation via endogenous pathway; protein N(6)-(lipoyl)lysine from octanoyl-[acyl-carrier-protein]: step 1/2. Functionally, catalyzes the transfer of endogenously produced octanoic acid from octanoyl-acyl-carrier-protein onto the lipoyl domains of lipoate-dependent enzymes. Lipoyl-ACP can also act as a substrate although octanoyl-ACP is likely to be the physiological substrate. The sequence is that of Octanoyltransferase from Geotalea uraniireducens (strain Rf4) (Geobacter uraniireducens).